The primary structure comprises 217 residues: Grancalcin (217 aa).

EF-hand domains follow at residues 48–83 (SSAG…SGIN), 89–122 (FSLE…AALN), 119–154 (AALN…MGYR), and 155–180 (LSPQ…DYVA). Asp-65, Asp-69, and Glu-71 together coordinate Ca(2+). Residues Asp-132, Asp-134, Ser-136, Thr-138, and Glu-143 each coordinate Ca(2+).

As to quaternary structure, homodimer. Interacts with SRI and LCP1. As to expression, detected in neutrophils and macrophages (at protein level). Highly expressed in bone marrow.

It localises to the cytoplasm. It is found in the cytoplasmic granule membrane. Its function is as follows. Calcium-binding protein that may play a role in the adhesion of neutrophils to fibronectin. May play a role in the formation of focal adhesions. In Homo sapiens (Human), this protein is Grancalcin (GCA).